The following is a 395-amino-acid chain: Demethylmacrocin O-methyltransferase (395 aa).

The catalysed reaction is demethylmacrocin + S-adenosyl-L-methionine = macrocin + S-adenosyl-L-homocysteine + H(+). It participates in antibiotic biosynthesis; tylosin biosynthesis. O-methyltransferase that catalyzes the conversion of demethylmacrocin to macrocin, the penultimate step of tylosin antibiotic biosynthesis. Also able to mediate the conversion of demethyllactenocin to lactenocin. The polypeptide is Demethylmacrocin O-methyltransferase (tylE) (Streptomyces fradiae (Streptomyces roseoflavus)).